The sequence spans 52 residues: U-scutigerotoxin(01)-Tl1a (52 aa).

The N-terminal stretch at 1–25 is a signal peptide; that stretch reads MLAKAMSLLMMFLLVLVIGSVMVSA.

It belongs to the scutigerotoxin-01 family. Contains 1 disulfide bond. As to expression, expressed by the venom gland.

It is found in the secreted. The chain is U-scutigerotoxin(01)-Tl1a from Thereuopoda longicornis (Long-legged centipede).